Reading from the N-terminus, the 517-residue chain is Protein MGF 505-2R (517 aa).

It belongs to the asfivirus MGF 505 family.

Its function is as follows. Plays a role in virus cell tropism, and may be required for efficient virus replication in macrophages. The polypeptide is Protein MGF 505-2R (Ornithodoros (relapsing fever ticks)).